The following is a 515-amino-acid chain: Bifunctional purine biosynthesis protein PurH (515 aa).

In terms of domain architecture, MGS-like spans 1 to 144 (MGRKALISVS…KNHKFVTIIV (144 aa)).

It belongs to the PurH family.

It catalyses the reaction (6R)-10-formyltetrahydrofolate + 5-amino-1-(5-phospho-beta-D-ribosyl)imidazole-4-carboxamide = 5-formamido-1-(5-phospho-D-ribosyl)imidazole-4-carboxamide + (6S)-5,6,7,8-tetrahydrofolate. The catalysed reaction is IMP + H2O = 5-formamido-1-(5-phospho-D-ribosyl)imidazole-4-carboxamide. It participates in purine metabolism; IMP biosynthesis via de novo pathway; 5-formamido-1-(5-phospho-D-ribosyl)imidazole-4-carboxamide from 5-amino-1-(5-phospho-D-ribosyl)imidazole-4-carboxamide (10-formyl THF route): step 1/1. Its pathway is purine metabolism; IMP biosynthesis via de novo pathway; IMP from 5-formamido-1-(5-phospho-D-ribosyl)imidazole-4-carboxamide: step 1/1. The protein is Bifunctional purine biosynthesis protein PurH of Persephonella marina (strain DSM 14350 / EX-H1).